Consider the following 452-residue polypeptide: Mitochondrial import inner membrane translocase subunit TIM44 (452 aa).

A Phosphothreonine modification is found at Thr-128. 166–173 (SGEKLGKT) serves as a coordination point for ATP. The residue at position 177 (Lys-177) is an N6-succinyllysine. Phosphoserine is present on Ser-180. Residue Lys-217 is modified to N6-succinyllysine.

Belongs to the Tim44 family. In terms of assembly, probable component of the PAM complex at least composed of a mitochondrial HSP70 protein, GRPEL1 or GRPEL2, TIMM44, TIMM16/PAM16 and TIMM14/DNAJC19. The complex interacts with the TIMM23 component of the TIM23 complex. Interacts with SLC25A4/ANT1 and SLC25A5/ANT2; leading to inhibit the presequence translocase TIMM23, thereby promoting stabilization of PINK1.

Its subcellular location is the mitochondrion inner membrane. Functionally, essential component of the PAM complex, a complex required for the translocation of transit peptide-containing proteins from the inner membrane into the mitochondrial matrix in an ATP-dependent manner. Recruits mitochondrial HSP70 to drive protein translocation into the matrix using ATP as an energy source. The polypeptide is Mitochondrial import inner membrane translocase subunit TIM44 (Timm44) (Mus musculus (Mouse)).